We begin with the raw amino-acid sequence, 368 residues long: FAD-dependent monooxygenase phomE (368 aa).

Ala11 contacts FAD. Active-site residues include Arg140 and Tyr178. FAD is bound by residues Asp249 and Gly262.

It belongs to the paxM FAD-dependent monooxygenase family. As to quaternary structure, monomer. FAD is required as a cofactor.

In terms of biological role, FAD-dependent monooxygenase; part of the gene cluster that mediates the biosynthesis of the phomopsins, a group of hexapeptide mycotoxins which infects lupins and causes lupinosis disease in livestock. The role of phomE within the phomopsins biosynthesis pathway has still to be determined. The pathway starts with the processing of the precursor phomA by several endopeptidases including kexin proteases as well as the cluster-specific S41 family peptidase phomP1 and the oligopeptidase phomG to produce 10 identical copies of the hexapeptide Tyr-Val-Ile-Pro-Ile-Asp. After being excised from the precursor peptide, the core peptides are cyclized and modified post-translationally by enzymes encoded within the gene cluster. The timing and order of proteolysis of the phomA precursor and PTMs are still unknown. Two tyrosinase-like enzymes, phomQ1 and phomQ2, catalyze the chlorination and hydroxylation of Tyr, respectively. PhomYb, is proposed to be involved in the construction of the macrocyclic structure. The other 4 ustYa family proteins may be involved in PTMs that generate the unique structure of phomopsin A. PhomYa is required for the hydroxylation of C-beta of Tyr. PhomYc, phomYd, and phomYe are responsible for the biosynthesis of 2,3-dehydroisoleucine (dIle), 2,3-dehydroaspartic acid (dAsp), and 3,4-dehydroproline (dPro), respectively. While dIle formation by phomYc is indispensable for the installation of dAsp by phomYd, the order of the other PTMs have not been elucidated yet. Most of the biosynthetic enzymes likely have broad substrate specificity, and thus, there might be a metabolic grid from a precursor to phomopsin A. The enzyme(s) responsible for the biosynthesis of 3,4-dehydrovaline (dVal) have also not been identified yet. Finally, phomM acts as an S-adenosylmethionine-dependent alpha-N-methyltransferase that catalyzes two successive N-methylation reactions, converting N-desmethyl-phomopsin A to phomopsin A and phomopsin A further to an N,N-dimethylated congener called phomopsin E. This Diaporthe leptostromiformis (Lupinosis disease fungus) protein is FAD-dependent monooxygenase phomE.